Consider the following 283-residue polypeptide: NAD kinase (283 aa).

Residue aspartate 68 is the Proton acceptor of the active site. NAD(+)-binding positions include aspartate 68 to glycine 69, arginine 73, asparagine 142 to aspartate 143, arginine 153, arginine 170, aspartate 172, and threonine 183 to serine 188.

It belongs to the NAD kinase family. A divalent metal cation serves as cofactor.

Its subcellular location is the cytoplasm. It catalyses the reaction NAD(+) + ATP = ADP + NADP(+) + H(+). Its function is as follows. Involved in the regulation of the intracellular balance of NAD and NADP, and is a key enzyme in the biosynthesis of NADP. Catalyzes specifically the phosphorylation on 2'-hydroxyl of the adenosine moiety of NAD to yield NADP. This chain is NAD kinase, found in Symbiobacterium thermophilum (strain DSM 24528 / JCM 14929 / IAM 14863 / T).